We begin with the raw amino-acid sequence, 130 residues long: MKHKRAIPNRGLRVADQIQRDVAGLIRELKDPRIGMVTIQAVEVTPDYAHAKVFFSVLIGDPAECAAALNEAAGYLRNSLFKRLQIHTVPTLHFQFDRTTERAADLNALIHQANATRAKDADDQPGATEA.

The protein belongs to the RbfA family. Monomer. Binds 30S ribosomal subunits, but not 50S ribosomal subunits or 70S ribosomes.

It is found in the cytoplasm. One of several proteins that assist in the late maturation steps of the functional core of the 30S ribosomal subunit. Associates with free 30S ribosomal subunits (but not with 30S subunits that are part of 70S ribosomes or polysomes). Required for efficient processing of 16S rRNA. May interact with the 5'-terminal helix region of 16S rRNA. The protein is Ribosome-binding factor A of Methylibium petroleiphilum (strain ATCC BAA-1232 / LMG 22953 / PM1).